We begin with the raw amino-acid sequence, 308 residues long: Staphylococcal superantigen-like 4 (308 aa).

Residues 1–30 (MKITTIAKTSLALGLLTTGVITTTTQAANA) form the signal peptide. Positions 32–117 (TLSSTKVEAP…TTKQVPTEIN (86 aa)) are disordered. Polar residues-rich tracts occupy residues 33–47 (LSST…TPPS) and 55–76 (SKPN…TANA). A compositionally biased stretch (low complexity) spans 77–93 (TTPPSTKVTTPPSTNTP). Positions 94 to 114 (QPMQSTKSDTPQSPTTKQVPT) are enriched in polar residues. Residues 180 to 278 (VDVFVVLEEN…VIKMKNGGKY (99 aa)) form a sialyl Lewis X-binding region.

The protein belongs to the staphylococcal/streptococcal toxin family.

The protein localises to the secreted. In terms of biological role, secreted protein that plays a role in immune innate response inhibition by interfering with host TLR2-mediated pathway. The chain is Staphylococcal superantigen-like 4 from Staphylococcus aureus (strain NCTC 8325 / PS 47).